A 121-amino-acid chain; its full sequence is Large ribosomal subunit protein bL12 (121 aa).

The protein belongs to the bacterial ribosomal protein bL12 family. As to quaternary structure, homodimer. Part of the ribosomal stalk of the 50S ribosomal subunit. Forms a multimeric L10(L12)X complex, where L10 forms an elongated spine to which 2 to 4 L12 dimers bind in a sequential fashion. Binds GTP-bound translation factors.

Functionally, forms part of the ribosomal stalk which helps the ribosome interact with GTP-bound translation factors. Is thus essential for accurate translation. The polypeptide is Large ribosomal subunit protein bL12 (Lactobacillus delbrueckii subsp. bulgaricus (strain ATCC BAA-365 / Lb-18)).